The sequence spans 210 residues: HTH-type transcriptional regulator MtrR (210 aa).

An HTH tetR-type domain is found at 9 to 69 (LKTKEHLMLA…ALFQRICDDI (61 aa)). Positions 32-51 (SLNEIAQAAGVTRGALYWHF) form a DNA-binding region, H-T-H motif.

In terms of assembly, homodimer. Binds to DNA as a pair of dimers.

DNA binding is affected significantly by increasing the NaCl concentration. Controls the permeability of the cell envelope to hydrophobic compounds such as antibiotics and detergents. Represses transcription of the mtrCDE-encoded efflux pump by binding within the mtrCDE promoter. Also negatively regulates the expression of farR, by binding to its promoter region, leading indirectly to the positive regulation of expression of the farAB-encoded efflux pump. This is HTH-type transcriptional regulator MtrR from Neisseria gonorrhoeae.